A 542-amino-acid polypeptide reads, in one-letter code: CTP synthase (542 aa).

The tract at residues 1–266 is amidoligase domain; that stretch reads MATNYIFVTG…DEFVCNRFHL (266 aa). Residue S14 participates in CTP binding. S14 provides a ligand contact to UTP. Residues 15–20 and D72 contribute to the ATP site; that span reads SLGKGI. Mg(2+)-binding residues include D72 and E140. Residues 147-149, 187-192, and K223 each bind CTP; these read DIE and KTKPTQ. Residues 187–192 and K223 each bind UTP; that span reads KTKPTQ. 239–241 contributes to the ATP binding site; the sequence is KDV. The region spanning 291-542 is the Glutamine amidotransferase type-1 domain; it reads TIGMVGKYVE…VKAAKENQKK (252 aa). L-glutamine is bound at residue G352. The Nucleophile; for glutamine hydrolysis role is filled by C379. L-glutamine-binding positions include 380 to 383, E403, and R470; that span reads LGMQ. Catalysis depends on residues H515 and E517.

It belongs to the CTP synthase family. In terms of assembly, homotetramer.

It carries out the reaction UTP + L-glutamine + ATP + H2O = CTP + L-glutamate + ADP + phosphate + 2 H(+). The catalysed reaction is L-glutamine + H2O = L-glutamate + NH4(+). The enzyme catalyses UTP + NH4(+) + ATP = CTP + ADP + phosphate + 2 H(+). It functions in the pathway pyrimidine metabolism; CTP biosynthesis via de novo pathway; CTP from UDP: step 2/2. With respect to regulation, allosterically activated by GTP, when glutamine is the substrate; GTP has no effect on the reaction when ammonia is the substrate. The allosteric effector GTP functions by stabilizing the protein conformation that binds the tetrahedral intermediate(s) formed during glutamine hydrolysis. Inhibited by the product CTP, via allosteric rather than competitive inhibition. Catalyzes the ATP-dependent amination of UTP to CTP with either L-glutamine or ammonia as the source of nitrogen. Regulates intracellular CTP levels through interactions with the four ribonucleotide triphosphates. This Actinobacillus succinogenes (strain ATCC 55618 / DSM 22257 / CCUG 43843 / 130Z) protein is CTP synthase.